A 411-amino-acid chain; its full sequence is Putative competence-damage inducible protein (411 aa).

Belongs to the CinA family.

The protein is Putative competence-damage inducible protein of Desulforamulus reducens (strain ATCC BAA-1160 / DSM 100696 / MI-1) (Desulfotomaculum reducens).